A 229-amino-acid polypeptide reads, in one-letter code: UPF0758 protein Moth_0536 (229 aa).

The MPN domain occupies 107-229; sequence VIRNPRDVAG…FTSLKERNLL (123 aa). The Zn(2+) site is built by H178, H180, and D191. The JAMM motif motif lies at 178–191; the sequence is HNHPSGDPTPSQED.

Belongs to the UPF0758 family.

In Moorella thermoacetica (strain ATCC 39073 / JCM 9320), this protein is UPF0758 protein Moth_0536.